Reading from the N-terminus, the 1227-residue chain is MYLYNLTLQKATGVTHAVHGNFSGGKQQEVLLSRGKSLELLRPDSNTGKVHTLLSTEIFGCVRALMAFRLTGGTKDYIVVGSDSGRIVILEYNPSKNALEKVHQETFGKSGCRRIVPGQYFAIDPKGRAVMIGAVEKQKLAYIMNRDTQARLTISSPLEAHKSNTLTYHMVGVDVGFDNPMFACLEIDYEEADMDPSGDAAQRTQQTLTFYELDLGLNHVVRKYSEPLEEHANFLVSVPGGNDGPSGVLICSENYLTYKNLGDQHDIRCPIPRRRNDLDDPERGMIFICSATHRTKSMYFFLLQTEQGDIFKITLETDDDVVSEIKLKYFDTVPPATAMCVLKTGFLFVASEFGNHYLYQIAHLGDDDDEPEFSSAMPLEEGETFFFAPRALKNLVLVDELPSFAPIITSQVADLANEDTPQLYVLCGRGPRSTLRVLRHGLEVSEMAVSELPGNPNAVWTVKKRADDEFDAYIIVSFVNATLVLSIGETVEEVTDSGFLGTTPTLCCAALGDDALVQVYPDGIRHIRSDKRVNEWKAPGKKSITKCAVNQRQVVITLSGRELVYFEMDPTGELNEYTERSEMPAEIMCMALGTVPEGEQRSWFLAVGLADNTVRILSLDPNNCLTPCSMQALPSPAESLCLVEMGHTESTTQGGLDDDAPAQRSGNNKGTIYLNIGLSNGVLLRTVLDPVSGDLADTRTRYLGSRPVKLFRIKMQGSEAVLAMSSRTWLSYYHQNRFHLTPLSYETLEYASGFSSEQCSEGIVAISTNTLRILALEKLGAVFNQVAFPLQYTPRTFVIHPDTGRMLIAETDHNAYTEDTKSARKEQMAEEMRSAAGDEERELAREMANAFINEVLPEDVFSSPKAGLGLWASQIRCLDAMHGQTMFSVPLTQNEAIMSMAMLKFSIAADGRYYLAVGIAKDLQLNPRISQGGCIDIYKIDPTCSSLEFMHRTDIDEIPGALCGFQGRLLAGCGRMLRIYDFGKKKMLRKCENKHIPYQIVNIQAMGHRVYVSDVQESVFFIRYRRAENQLIIFADDTHPRWVTATTLLDYDTIAIADKFGNLSIQRLPHSVTDDVDEDPTGTKSLWDRGLLSGASQKSENICSFHVGEIIMSLQKATLIPGGSEALIYATLSGTVGAFVPFTSREDYDFFQHLEMHMRNENPPLCGRDHLSYRSSYYPVKNVLDGDLCEQYLSIEAAKQKSIAGDMFRTPNQICKKLEDIRTRYAF.

The protein belongs to the RSE1 family. As to quaternary structure, identified in the spliceosome A complex; remains associated with the spliceosome throughout the splicing process. Component of the spliceosome B complex. Identified in the spliceosome C complex. Identified in the spliceosome E complex. Component of the U11/U12 snRNPs that are part of the U12-type spliceosome. Component of splicing factor SF3B complex. Identified in the SAGA transcription regulatory histone acetylation (HAT) complex; the interaction is RNA-independent.

Its subcellular location is the nucleus. Functionally, involved in pre-mRNA splicing as a component of the splicing factor SF3B complex, a constituent of the spliceosome. SF3B complex is required for 'A' complex assembly formed by the stable binding of U2 snRNP to the branchpoint sequence (BPS) in pre-mRNA. Sequence independent binding of SF3A/SF3B complex upstream of the branch site is essential, it may anchor U2 snRNP to the pre-mRNA. May also be involved in the assembly of the 'E' complex. Also belongs to the minor U12-dependent spliceosome, which is involved in the splicing of rare class of nuclear pre-mRNA intron. This is Splicing factor 3B subunit 3 from Drosophila melanogaster (Fruit fly).